The sequence spans 2220 residues: Calcineurin-binding protein cabin-1 (2220 aa).

2 positions are modified to phosphoserine: Ser-10 and Ser-11. Thr-12 bears the Phosphothreonine mark. Phosphoserine occurs at positions 20 and 66. 3 TPR repeats span residues 36–69 (AFAL…SLLR), 90–123 (YSTY…DSTD), and 125–157 (NLWY…NPDH). Residues 361 to 400 (GAPVGDISGGDKSKKGVKRKKISEESGETAKRRSARVRNT) are disordered. Positions 382–391 (ISEESGETAK) are enriched in basic and acidic residues. Phosphoserine is present on residues Ser-433 and Ser-450. The TPR 4 repeat unit spans residues 615–648 (VRVYWLKARFLALQGDMEQALENYDICTEMLQSS). Position 673 is a phosphoserine (Ser-673). TPR repeat units lie at residues 1055 to 1088 (NELY…CPNR) and 1106 to 1139 (KLNS…DSSN). Disordered stretches follow at residues 1299 to 1476 (FARG…STPT), 1668 to 1845 (AEGS…RLSR), 1916 to 2165 (AQRQ…GSIS), and 2197 to 2220 (VLET…YMDI). Basic and acidic residues predominate over residues 1301–1324 (RGEEKNTPKASEKEKACLVDEDSH). The span at 1327–1349 (AGTLPGPGASLPSSSGPGLTSPP) shows a compositional bias: low complexity. Residues 1377 to 1397 (DSTAVALSDSSSTQDFFNEPT) show a composition bias toward polar residues. Over residues 1402 to 1412 (GSRKSYTEKRL) the composition is skewed to basic and acidic residues. Ser-1439 bears the Phosphoserine mark. Over residues 1715 to 1725 (SGPGPEPGGKV) the composition is skewed to gly residues. Basic and acidic residues-rich tracts occupy residues 1744-1753 (SGERKDKESP) and 1784-1794 (PARDRGPESRP). Residues 1812–1823 (PLTPAQPAPAPA) are compositionally biased toward pro residues. 2 stretches are compositionally biased toward polar residues: residues 1918-1927 (RQASGDTPTT) and 1975-1989 (TIIT…STLD). Thr-1924 bears the Phosphothreonine mark. Residues 2070 to 2081 (GKLRPEPRRDGE) show a composition bias toward basic and acidic residues. Residues 2091-2112 (PLSSPPTAASSKAPSSGSAQPP) show a composition bias toward low complexity. Ser-2094 carries the phosphoserine modification. Residues 2116–2153 (PGKPEPSRAKSRPLPNMPKLVIPSAATKFPPEITVTPP) are required for interaction with calcineurin. Thr-2151 and Thr-2154 each carry phosphothreonine. A compositionally biased stretch (acidic residues) spans 2207–2220 (LESETDEDDDYMDI).

Component of a complex that includes at least ASF1A, CABIN1, HIRA, histone H3.3 and UBN1. Interacts with calcineurin. Interacts with MEF2B. Post-translationally, activated through PKC-mediated hyperphosphorylation. Phosphorylation by the DNA damage kinases ATM and CHK2 enhances ubiquitination. In terms of processing, upon genotoxic stress, ubiquitination by the DCX(DDB2) E3 ubiquitin-protein ligase complex targets CABIN1 for proteasomal degradation, leading to the release of p53/TP53. In terms of tissue distribution, widely expressed in different tissues.

It is found in the nucleus. In terms of biological role, may be required for replication-independent chromatin assembly. May serve as a negative regulator of T-cell receptor (TCR) signaling via inhibition of calcineurin. Inhibition of activated calcineurin is dependent on both PKC and calcium signals. Acts as a negative regulator of p53/TP53 by keeping p53 in an inactive state on chromatin at promoters of a subset of it's target genes. In Homo sapiens (Human), this protein is Calcineurin-binding protein cabin-1 (CABIN1).